The primary structure comprises 206 residues: High frequency lysogenization protein HflD homolog (206 aa).

The protein belongs to the HflD family.

Its subcellular location is the cytoplasm. It is found in the cell inner membrane. The sequence is that of High frequency lysogenization protein HflD homolog from Idiomarina loihiensis (strain ATCC BAA-735 / DSM 15497 / L2-TR).